A 223-amino-acid chain; its full sequence is Adapter protein MecA (223 aa).

Belongs to the MecA family. In terms of assembly, homodimer.

Functionally, enables the recognition and targeting of unfolded and aggregated proteins to the ClpC protease or to other proteins involved in proteolysis. In Limosilactobacillus reuteri (strain DSM 20016) (Lactobacillus reuteri), this protein is Adapter protein MecA.